The chain runs to 312 residues: tRNA pseudouridine synthase B (312 aa).

Asp-49 acts as the Nucleophile in catalysis.

Belongs to the pseudouridine synthase TruB family. Type 1 subfamily.

The catalysed reaction is uridine(55) in tRNA = pseudouridine(55) in tRNA. Its function is as follows. Responsible for synthesis of pseudouridine from uracil-55 in the psi GC loop of transfer RNAs. In Chelativorans sp. (strain BNC1), this protein is tRNA pseudouridine synthase B.